We begin with the raw amino-acid sequence, 39 residues long: MIEPLLCGIVLGLVPITLLGLFVSAWNQYRRGSGMLDMD.

A helical membrane pass occupies residues Leu-5–Ala-25.

It belongs to the PetG family. In terms of assembly, the 4 large subunits of the cytochrome b6-f complex are cytochrome b6, subunit IV (17 kDa polypeptide, PetD), cytochrome f and the Rieske protein, while the 4 small subunits are PetG, PetL, PetM and PetN. The complex functions as a dimer.

It localises to the cellular thylakoid membrane. Component of the cytochrome b6-f complex, which mediates electron transfer between photosystem II (PSII) and photosystem I (PSI), cyclic electron flow around PSI, and state transitions. PetG is required for either the stability or assembly of the cytochrome b6-f complex. The sequence is that of Cytochrome b6-f complex subunit 5 from Prochlorococcus marinus subsp. pastoris (strain CCMP1986 / NIES-2087 / MED4).